The following is a 360-amino-acid chain: Chorismate synthase (360 aa).

NADP(+) is bound at residue R47. Residues 124-126, G286, 301-305, and R327 each bind FMN; these read RAS and KPTAT.

This sequence belongs to the chorismate synthase family. Homotetramer. It depends on FMNH2 as a cofactor.

The catalysed reaction is 5-O-(1-carboxyvinyl)-3-phosphoshikimate = chorismate + phosphate. Its pathway is metabolic intermediate biosynthesis; chorismate biosynthesis; chorismate from D-erythrose 4-phosphate and phosphoenolpyruvate: step 7/7. In terms of biological role, catalyzes the anti-1,4-elimination of the C-3 phosphate and the C-6 proR hydrogen from 5-enolpyruvylshikimate-3-phosphate (EPSP) to yield chorismate, which is the branch point compound that serves as the starting substrate for the three terminal pathways of aromatic amino acid biosynthesis. This reaction introduces a second double bond into the aromatic ring system. This chain is Chorismate synthase, found in Synechococcus sp. (strain RCC307).